Reading from the N-terminus, the 239-residue chain is Lipoprotein-releasing system ATP-binding protein LolD (239 aa).

The 230-residue stretch at 10 to 239 (VELSGVRKDY…ADGPHRRSGA (230 aa)) folds into the ABC transporter domain. An ATP-binding site is contributed by 46-53 (GPSGSGKS).

The protein belongs to the ABC transporter superfamily. Lipoprotein translocase (TC 3.A.1.125) family. In terms of assembly, the complex is composed of two ATP-binding proteins (LolD) and two transmembrane proteins (LolC and LolE).

It localises to the cell inner membrane. Its function is as follows. Part of the ABC transporter complex LolCDE involved in the translocation of mature outer membrane-directed lipoproteins, from the inner membrane to the periplasmic chaperone, LolA. Responsible for the formation of the LolA-lipoprotein complex in an ATP-dependent manner. This Anaeromyxobacter dehalogenans (strain 2CP-C) protein is Lipoprotein-releasing system ATP-binding protein LolD.